Consider the following 284-residue polypeptide: RNase adapter protein RapZ (284 aa).

ATP is bound at residue 8–15; sequence GRSGSGKS. 56-59 provides a ligand contact to GTP; it reads DVRN. Positions 266–284 are RNA-binding; it reads RSRGKNVQSRHRTLEKRKS.

This sequence belongs to the RapZ-like family. RapZ subfamily. Homotrimer.

In terms of biological role, modulates the synthesis of GlmS, by affecting the processing and stability of the regulatory small RNA GlmZ. When glucosamine-6-phosphate (GlcN6P) concentrations are high in the cell, RapZ binds GlmZ and targets it to cleavage by RNase E. Consequently, GlmZ is inactivated and unable to activate GlmS synthesis. Under low GlcN6P concentrations, RapZ is sequestered and inactivated by an other regulatory small RNA, GlmY, preventing GlmZ degradation and leading to synthesis of GlmS. This is RNase adapter protein RapZ from Klebsiella oxytoca.